A 429-amino-acid polypeptide reads, in one-letter code: Enolase (429 aa).

Q174 contributes to the (2R)-2-phosphoglycerate binding site. E218 serves as the catalytic Proton donor. Mg(2+) is bound by residues D254, E295, and D321. Positions 346, 375, 376, and 397 each coordinate (2R)-2-phosphoglycerate. The active-site Proton acceptor is K346.

It belongs to the enolase family. Mg(2+) serves as cofactor.

It localises to the cytoplasm. Its subcellular location is the secreted. The protein localises to the cell surface. The catalysed reaction is (2R)-2-phosphoglycerate = phosphoenolpyruvate + H2O. Its pathway is carbohydrate degradation; glycolysis; pyruvate from D-glyceraldehyde 3-phosphate: step 4/5. In terms of biological role, catalyzes the reversible conversion of 2-phosphoglycerate (2-PG) into phosphoenolpyruvate (PEP). It is essential for the degradation of carbohydrates via glycolysis. This Methanosarcina acetivorans (strain ATCC 35395 / DSM 2834 / JCM 12185 / C2A) protein is Enolase.